We begin with the raw amino-acid sequence, 469 residues long: Mitochondrial adenyl nucleotide antiporter SLC25A25 (469 aa).

Residues 1–165 (MLCLCLYVPI…LYWKHSTIFD (165 aa)) form a regulatory N-terminal domain region. Topologically, residues 1-189 (MLCLCLYVPI…ERQTGMWWRH (189 aa)) are mitochondrial intermembrane. 3 consecutive EF-hand domains span residues 47–80 (TYRQ…QDHE), 78–113 (DHEK…LGVK), and 114–149 (ISEQ…HPVE). The Ca(2+) site is built by aspartate 60, aspartate 62, aspartate 64, glutamine 66, and glutamate 71. The linker region stretch occupies residues 151–160 (IPEIILYWKH). The C-terminal transmembrane transporter domain stretch occupies residues 166–469 (VGENLTVPDE…LKITLGVQSR (304 aa)). Solcar repeat units follow at residues 184 to 270 (GMWW…MKRL), 278 to 363 (LRIH…LKNT), and 375 to 463 (PGVF…LKIT). Residues 190–207 (LVAGGGAGAVSRTCTAPL) form a helical membrane-spanning segment. The Mitochondrial matrix segment spans residues 208 to 244 (DRLKVLMQVHASRSNNMCIIGGFTQMIREGGAKSLWR). Residues 245 to 264 (GNGINVLKIAPESAIKFMAY) traverse the membrane as a helical segment. Residues 265-287 (EQMKRLVGSDQETLRIHERLVAG) are Mitochondrial intermembrane-facing. The chain crosses the membrane as a helical span at residues 288–301 (SLAGAIAQSSIYPM). Over 302–337 (EVLKTRMALRKTGQYSGMLDCAKRILAKEGVAAFYK) the chain is Mitochondrial matrix. The chain crosses the membrane as a helical span at residues 338-357 (GYIPNMLGIIPYAGIDLAVY). Residues 358-380 (ETLKNTWLQRYAVNSADPGVFVL) lie on the Mitochondrial intermembrane side of the membrane. The helical transmembrane segment at 381 to 398 (LACGTISSTCGQLASYPL) threads the bilayer. At 399-437 (ALVRTRMQAQASIEGAPEVTMSSLFKQILRTEGAFGLYR) the chain is on the mitochondrial matrix side. A helical transmembrane segment spans residues 438 to 457 (GLAPNFMKVIPAVSISYVVY). The Mitochondrial intermembrane segment spans residues 458-469 (ENLKITLGVQSR).

The protein belongs to the mitochondrial carrier (TC 2.A.29) family. Mainly present in the liver and the skeletal muscle (at protein level).

The protein resides in the mitochondrion inner membrane. It carries out the reaction Mg(2+)(out) + phosphate(in) + ATP(out) = Mg(2+)(in) + phosphate(out) + ATP(in). With respect to regulation, activated by an increase in cytosolic calcium levels that induce a conformational change of the N-terminal regulatory domain, uncapping the channel and allowing transport. Its function is as follows. Electroneutral antiporter that most probably mediates the transport of adenyl nucleotides through the inner mitochondrial membrane. Originally identified as an ATP-magnesium/inorganic phosphate antiporter, it could have a broader specificity for adenyl nucleotides. By regulating the mitochondrial matrix adenyl nucleotide pool could adapt to changing cellular energetic demands and indirectly regulate adenyl nucleotide-dependent metabolic pathways. In Rattus norvegicus (Rat), this protein is Mitochondrial adenyl nucleotide antiporter SLC25A25.